Consider the following 468-residue polypeptide: Cell division protein FtsA (468 aa).

Positions 416–468 are disordered; the sequence is NKKDTHENEVESSDEEIYQSEDNHQEHKQNHEHVQDKDKEESKFKKLMKSLFE. Over residues 425–434 the composition is skewed to acidic residues; that stretch reads VESSDEEIYQ. The segment covering 436 to 459 has biased composition (basic and acidic residues); sequence EDNHQEHKQNHEHVQDKDKEESKF.

This sequence belongs to the FtsA/MreB family. In terms of assembly, self-interacts. Interacts with FtsZ.

The protein resides in the cell membrane. In terms of biological role, cell division protein that is involved in the assembly of the Z ring. May serve as a membrane anchor for the Z ring. In Staphylococcus aureus (strain MRSA252), this protein is Cell division protein FtsA.